Consider the following 164-residue polypeptide: Large ribosomal subunit protein uL10 (164 aa).

This sequence belongs to the universal ribosomal protein uL10 family. Part of the ribosomal stalk of the 50S ribosomal subunit. The N-terminus interacts with L11 and the large rRNA to form the base of the stalk. The C-terminus forms an elongated spine to which L12 dimers bind in a sequential fashion forming a multimeric L10(L12)X complex.

Its function is as follows. Forms part of the ribosomal stalk, playing a central role in the interaction of the ribosome with GTP-bound translation factors. The protein is Large ribosomal subunit protein uL10 of Photobacterium profundum (strain SS9).